The chain runs to 303 residues: DDRGK domain-containing protein 1 (303 aa).

The Lumenal segment spans residues 1-2; that stretch reads MD. Residues 3–23 form a helical membrane-spanning segment; that stretch reads LILLIGIATALLIILLTLYFL. Residues 24–303 are Cytoplasmic-facing; it reads QKRNAPAETK…TPVTASEGGA (280 aa). Disordered stretches follow at residues 31-53 and 84-160; these read ETKA…VPRR and AIDP…AEVE. Positions 106–160 are enriched in basic and acidic residues; the sequence is LDEKMGAKKRAKMEAKEQKRLQREQELHDREQRKVKEAKEEAERKQQDDLDAEVE.

Belongs to the DDRGK1 family. In terms of assembly, interacts with Atg9; the interaction is transient.

It localises to the endoplasmic reticulum membrane. Functionally, substrate adapter for ufmylation, the covalent attachment of the ubiquitin-like modifier UFM1 to substrate proteins. Required for ufmylation of Atg9; protects the nervous system during aging, possibly by stabilizing Atg9 and supporting its function. This Drosophila grimshawi (Hawaiian fruit fly) protein is DDRGK domain-containing protein 1.